Here is a 97-residue protein sequence, read N- to C-terminus: MIPGGLTEARPATAEVQEIADRVKAQLEEETNEKYEIFKAVEYKTQVVAGVNYFIKMDVGGGCFTHIKVFKDLSGKNNLELTGYQTNKTEDDELTYF.

Met1 carries the N-acetylmethionine modification. The short motif at Gln46–Gly50 is the Secondary area of contact element.

Belongs to the cystatin family.

It localises to the cytoplasm. In terms of biological role, this is an intracellular thiol proteinase inhibitor. This Mus musculus (Mouse) protein is Cystatin-A (Csta).